The sequence spans 78 residues: Large ribosomal subunit protein bL28 (78 aa).

The disordered stretch occupies residues 1–21 (MSRVCQVTGKKPMVGNNRSHA).

Belongs to the bacterial ribosomal protein bL28 family.

The sequence is that of Large ribosomal subunit protein bL28 from Shewanella woodyi (strain ATCC 51908 / MS32).